The following is a 762-amino-acid chain: MAIQTSNLGYPRIGLQREWKKTLEAFWSNKINEEQFLTTMKEIRLQHVKVQQEKGIELIPIGDFTYYDHVLDTAYMLGFIPSRFSEFTSYLDVYFAMARGSKDHVASEMTKWFNTNYHYIVPEYEEGLQISLKDNRPLRLYEEAKQELGVDGKPVILGPYTFLKLAKGYTQEQFATILKQLVAPYVQLLSELHAAGAQIIQVDEPIFASLTKEEVQQAKEIYEAIRKEVPNATLLLQTYFDSVEENYEEIITFPVSSIGLDFVHGKEGNLNAISKYGFPADKTLAVGCIDGRNIWRADLDEVLTLFTTLQKQVQTKDLIVQPSCSLLHTPIDKTEETHLSTELFDALAFANQKLEELVLIHSALTQGTESISNELETYRNVHHTIRSSAARNREDVKAARTALKEEDFSRPLPFEKRYELQQVALKLPLLPTTTIGSFPQTTEVRQTRKEWRNGIISNEQYEQFIEKETEKWIRYQEEIGLDVLVHGEFERTDMVEYFGERLAGFSFTKNGWVQSYGSRCVKPPVIYGDVAFINGMTIKETVYAQSLTEKVVKGMLTGPVTILNWSFVRNDIPRKEVSYQIALALRHEIELLESSGIRVIQVDEPALREGMPLKEKDWDAYITWAVQSFLLATSSVANETQIHTHMCYSNFEDIVDAIRALDADVISIETSRSHGEFIDTLKHTTYEKGIGLGVYDIHSPRVPSKDEMYEIVEQSLQVCDPKYFWINPDCGLKTRRTEEVIPALEHMVQAAKDARSLLKTNA.

5-methyltetrahydropteroyltri-L-glutamate contacts are provided by residues 17–20 (REWK) and K111. L-homocysteine contacts are provided by residues 435–437 (IGS) and E488. L-methionine is bound by residues 435-437 (IGS) and E488. 5-methyltetrahydropteroyltri-L-glutamate contacts are provided by residues 519–520 (RC) and W565. Position 603 (D603) interacts with L-homocysteine. D603 contributes to the L-methionine binding site. E609 provides a ligand contact to 5-methyltetrahydropteroyltri-L-glutamate. Positions 645, 647, and 669 each coordinate Zn(2+). The active-site Proton donor is H698. C730 lines the Zn(2+) pocket.

This sequence belongs to the vitamin-B12 independent methionine synthase family. It depends on Zn(2+) as a cofactor.

The enzyme catalyses 5-methyltetrahydropteroyltri-L-glutamate + L-homocysteine = tetrahydropteroyltri-L-glutamate + L-methionine. It participates in amino-acid biosynthesis; L-methionine biosynthesis via de novo pathway; L-methionine from L-homocysteine (MetE route): step 1/1. In terms of biological role, catalyzes the transfer of a methyl group from 5-methyltetrahydrofolate to homocysteine resulting in methionine formation. The polypeptide is 5-methyltetrahydropteroyltriglutamate--homocysteine methyltransferase (Bacillus thuringiensis (strain Al Hakam)).